Consider the following 219-residue polypeptide: 2-hydroxy-3-keto-5-methylthiopentenyl-1-phosphate phosphatase (219 aa).

This sequence belongs to the HAD-like hydrolase superfamily. MtnX family.

The catalysed reaction is 2-hydroxy-5-methylsulfanyl-3-oxopent-1-enyl phosphate + H2O = 1,2-dihydroxy-5-(methylsulfanyl)pent-1-en-3-one + phosphate. It functions in the pathway amino-acid biosynthesis; L-methionine biosynthesis via salvage pathway; L-methionine from S-methyl-5-thio-alpha-D-ribose 1-phosphate: step 4/6. Functionally, dephosphorylates 2-hydroxy-3-keto-5-methylthiopentenyl-1-phosphate (HK-MTPenyl-1-P) yielding 1,2-dihydroxy-3-keto-5-methylthiopentene (DHK-MTPene). This is 2-hydroxy-3-keto-5-methylthiopentenyl-1-phosphate phosphatase from Exiguobacterium sibiricum (strain DSM 17290 / CCUG 55495 / CIP 109462 / JCM 13490 / 255-15).